The primary structure comprises 383 residues: Hydrogenase expression/formation protein HoxV (383 aa).

The sequence is that of Hydrogenase expression/formation protein HoxV (hoxV) from Cupriavidus necator (strain ATCC 17699 / DSM 428 / KCTC 22496 / NCIMB 10442 / H16 / Stanier 337) (Ralstonia eutropha).